A 428-amino-acid chain; its full sequence is Phosphomethylpyrimidine synthase (428 aa).

Substrate is bound by residues Asn-66, Met-95, Tyr-124, His-163, Ser-185–Gly-187, Asp-226–Arg-229, and Glu-265. His-269 is a binding site for Zn(2+). Tyr-292 is a binding site for substrate. His-333 lines the Zn(2+) pocket. Residues Cys-407, Cys-410, and Cys-414 each contribute to the [4Fe-4S] cluster site.

The protein belongs to the ThiC family. [4Fe-4S] cluster is required as a cofactor.

It catalyses the reaction 5-amino-1-(5-phospho-beta-D-ribosyl)imidazole + S-adenosyl-L-methionine = 4-amino-2-methyl-5-(phosphooxymethyl)pyrimidine + CO + 5'-deoxyadenosine + formate + L-methionine + 3 H(+). Its pathway is cofactor biosynthesis; thiamine diphosphate biosynthesis. Functionally, catalyzes the synthesis of the hydroxymethylpyrimidine phosphate (HMP-P) moiety of thiamine from aminoimidazole ribotide (AIR) in a radical S-adenosyl-L-methionine (SAM)-dependent reaction. The protein is Phosphomethylpyrimidine synthase of Thermococcus kodakarensis (strain ATCC BAA-918 / JCM 12380 / KOD1) (Pyrococcus kodakaraensis (strain KOD1)).